The following is a 188-amino-acid chain: Probable RNA-binding protein 18 (188 aa).

Residues 23–104 (HRLWIGNIDP…KKLVVRWAHA (82 aa)) form the RRM domain. Residues 151-188 (EENPDDYSGPSAYTYNKPPDKREKRSQPYHKHFRKHRR) are disordered. Residues 177–188 (QPYHKHFRKHRR) show a composition bias toward basic residues.

The polypeptide is Probable RNA-binding protein 18 (rbm18) (Danio rerio (Zebrafish)).